The sequence spans 423 residues: UPF0229 protein PSPPH_0628 (423 aa).

The disordered stretch occupies residues 65–110; it reads HHGRGGKQTVVHPGNKEFTTGEHIARPQGGGGGKGPGKAGNSGEGM. The segment covering 92-107 has biased composition (gly residues); the sequence is QGGGGGKGPGKAGNSG.

Belongs to the UPF0229 family.

This chain is UPF0229 protein PSPPH_0628, found in Pseudomonas savastanoi pv. phaseolicola (strain 1448A / Race 6) (Pseudomonas syringae pv. phaseolicola (strain 1448A / Race 6)).